The chain runs to 216 residues: ATP-dependent Clp protease proteolytic subunit (216 aa).

Ser120 (nucleophile) is an active-site residue. His145 is a catalytic residue.

The protein belongs to the peptidase S14 family. As to quaternary structure, fourteen ClpP subunits assemble into 2 heptameric rings which stack back to back to give a disk-like structure with a central cavity, resembling the structure of eukaryotic proteasomes.

Its subcellular location is the cytoplasm. The catalysed reaction is Hydrolysis of proteins to small peptides in the presence of ATP and magnesium. alpha-casein is the usual test substrate. In the absence of ATP, only oligopeptides shorter than five residues are hydrolyzed (such as succinyl-Leu-Tyr-|-NHMec, and Leu-Tyr-Leu-|-Tyr-Trp, in which cleavage of the -Tyr-|-Leu- and -Tyr-|-Trp bonds also occurs).. Its function is as follows. Cleaves peptides in various proteins in a process that requires ATP hydrolysis. Has a chymotrypsin-like activity. Plays a major role in the degradation of misfolded proteins. The chain is ATP-dependent Clp protease proteolytic subunit from Cupriavidus pinatubonensis (strain JMP 134 / LMG 1197) (Cupriavidus necator (strain JMP 134)).